The chain runs to 125 residues: Glycine cleavage system H protein (125 aa).

The Lipoyl-binding domain maps to 22-104 (SYIIGITDFA…YDTGWILKLT (83 aa)). Residue Lys63 is modified to N6-lipoyllysine.

This sequence belongs to the GcvH family. In terms of assembly, the glycine cleavage system is composed of four proteins: P, T, L and H. It depends on (R)-lipoate as a cofactor.

Functionally, the glycine cleavage system catalyzes the degradation of glycine. The H protein shuttles the methylamine group of glycine from the P protein to the T protein. Its function is as follows. Is also involved in protein lipoylation via its role as an octanoyl/lipoyl carrier protein intermediate. The sequence is that of Glycine cleavage system H protein from Listeria welshimeri serovar 6b (strain ATCC 35897 / DSM 20650 / CCUG 15529 / CIP 8149 / NCTC 11857 / SLCC 5334 / V8).